The chain runs to 534 residues: CTP synthase (534 aa).

An amidoligase domain region spans residues Met-1–Leu-265. CTP is bound at residue Ser-12. Residue Ser-12 coordinates UTP. Gly-13–Ile-18 serves as a coordination point for ATP. Tyr-53 contributes to the L-glutamine binding site. Asp-70 provides a ligand contact to ATP. Positions 70 and 140 each coordinate Mg(2+). CTP is bound by residues Asp-147 to Glu-149, Lys-186 to Gln-191, and Lys-222. Residues Lys-186 to Gln-191 and Lys-222 each bind UTP. Positions Lys-289–Glu-530 constitute a Glutamine amidotransferase type-1 domain. Gly-352 serves as a coordination point for L-glutamine. Cys-379 serves as the catalytic Nucleophile; for glutamine hydrolysis. L-glutamine contacts are provided by residues Leu-380–Gln-383, Glu-403, and Arg-460. Residues His-503 and Glu-505 contribute to the active site.

Belongs to the CTP synthase family. As to quaternary structure, homotetramer.

The catalysed reaction is UTP + L-glutamine + ATP + H2O = CTP + L-glutamate + ADP + phosphate + 2 H(+). It catalyses the reaction L-glutamine + H2O = L-glutamate + NH4(+). The enzyme catalyses UTP + NH4(+) + ATP = CTP + ADP + phosphate + 2 H(+). The protein operates within pyrimidine metabolism; CTP biosynthesis via de novo pathway; CTP from UDP: step 2/2. With respect to regulation, allosterically activated by GTP, when glutamine is the substrate; GTP has no effect on the reaction when ammonia is the substrate. The allosteric effector GTP functions by stabilizing the protein conformation that binds the tetrahedral intermediate(s) formed during glutamine hydrolysis. Inhibited by the product CTP, via allosteric rather than competitive inhibition. Catalyzes the ATP-dependent amination of UTP to CTP with either L-glutamine or ammonia as the source of nitrogen. Regulates intracellular CTP levels through interactions with the four ribonucleotide triphosphates. The protein is CTP synthase of Methanosarcina mazei (strain ATCC BAA-159 / DSM 3647 / Goe1 / Go1 / JCM 11833 / OCM 88) (Methanosarcina frisia).